The primary structure comprises 204 residues: Probable nicotinate-nucleotide adenylyltransferase (204 aa).

Belongs to the NadD family.

The catalysed reaction is nicotinate beta-D-ribonucleotide + ATP + H(+) = deamido-NAD(+) + diphosphate. The protein operates within cofactor biosynthesis; NAD(+) biosynthesis; deamido-NAD(+) from nicotinate D-ribonucleotide: step 1/1. Functionally, catalyzes the reversible adenylation of nicotinate mononucleotide (NaMN) to nicotinic acid adenine dinucleotide (NaAD). In Mycobacterium sp. (strain JLS), this protein is Probable nicotinate-nucleotide adenylyltransferase.